Reading from the N-terminus, the 293-residue chain is uncharacterized protein (293 aa).

Active-site charge relay system residues include T43 and Y105. The active-site Proton donor is Y131. K159 acts as the Schiff-base intermediate with substrate in catalysis.

The protein belongs to the DapA family. Homotetramer.

The protein resides in the cytoplasm. This is an uncharacterized protein from Thermococcus onnurineus (strain NA1).